A 428-amino-acid chain; its full sequence is Trigger factor (428 aa).

In terms of domain architecture, PPIase FKBP-type spans 163–248 (GDTAIIDFEG…INDVKVKELS (86 aa)).

It belongs to the FKBP-type PPIase family. Tig subfamily.

It is found in the cytoplasm. It catalyses the reaction [protein]-peptidylproline (omega=180) = [protein]-peptidylproline (omega=0). In terms of biological role, involved in protein export. Acts as a chaperone by maintaining the newly synthesized protein in an open conformation. Functions as a peptidyl-prolyl cis-trans isomerase. The chain is Trigger factor from Clostridioides difficile (strain 630) (Peptoclostridium difficile).